A 693-amino-acid chain; its full sequence is ATP-dependent DNA helicase RecG (693 aa).

Positions 48–146 are wedge domain; the sequence is THLYPIGELL…GDLSTPELQE (99 aa). The Helicase ATP-binding domain occupies 283–448; sequence DMALDVPMMR…AYADLDTSVI (166 aa). Position 296–303 (296–303) interacts with ATP; the sequence is GDVGSGKT. The DEAH box motif lies at 397 to 400; it reads DEQH. The region spanning 482-628 is the Helicase C-terminal domain; sequence EGRQAYWVCT…GFVIAQKDLE (147 aa).

Belongs to the helicase family. RecG subfamily. Monomer in solution. Probably a monomer on HJ DNA. Binding to fork DNA is facilitated by SSB; the proteins do not seem to stably associate. Requires Mg(2+) as cofactor.

It carries out the reaction Couples ATP hydrolysis with the unwinding of duplex DNA by translocating in the 3'-5' direction.. It catalyses the reaction ATP + H2O = ADP + phosphate + H(+). Its function is as follows. Plays a critical role in recombination and DNA repair. Helps process Holliday junction (HJ) intermediates to mature products by catalyzing branch migration. Has replication fork regression activity, unwinds stalled or blocked replication forks to make a HJ that can be resolved by RuvC or RusA. Also rewinds unwound dsDNA in an ATP-dependent manner. Has double-stranded (ds)DNA unwinding activity characteristic of a DNA helicase with 3'-5' polarity in vitro on linear dsDNA; branched duplex DNA (Y-DNA) substrates adopt different conformations that influence which of the two arms are unwound. Binds and unwinds HJ and Y-DNA but not linear duplex DNA; binds no more than 10 nucleotides of ssDNA at a fork. Has a role in constitutive stable DNA replication (cSDR, DNA replication in the absence of protein synthesis) and R-loop (RNA annealed with dsDNA) formation. Unwinds R-loops but not RNA:DNA hybrids. Is genetically synergistic to RadA and RuvABC. The protein is ATP-dependent DNA helicase RecG of Escherichia coli (strain K12).